The chain runs to 458 residues: Preferentially expressed antigen in melanoma-like protein 1 (458 aa).

An LRR 1; degenerate repeat occupies 99-126 (RCKLQVLDLRVMPLKLWNRLPVFGTAGC). An LRR 2; degenerate repeat occupies 176-200 (SLCCCKLQIWAMSMYYHRKLLEILD). The LRR 3; degenerate repeat unit spans residues 201–227 (LDSVQELRMYCISNPVCLLNFAPYLGR). The stretch at 228–263 (MRNLRCLILSHLWQTFSMTPVEKQQVITQFTSQFLK) is one LRR 4; degenerate repeat. 5 LRR repeats span residues 264 to 289 (LKCL…FWWL), 290 to 321 (KTPL…SQLK), 322 to 340 (HLNL…PLRV), 346 to 373 (ASTL…ALRC), and 374 to 398 (CTQL…LAYN).

This sequence belongs to the PRAME family. In terms of tissue distribution, specifically expressed in testis (at protein level).

It is found in the cytoplasm. The protein resides in the cytoplasmic vesicle. The protein localises to the secretory vesicle. Its subcellular location is the acrosome. It localises to the cell projection. It is found in the cilium. The protein resides in the flagellum. Functionally, may play a role in acrosome development and also in sperm maturation and motility. The polypeptide is Preferentially expressed antigen in melanoma-like protein 1 (Mus musculus (Mouse)).